Here is a 70-residue protein sequence, read N- to C-terminus: Gas vesicle protein A (70 aa).

Belongs to the gas vesicle GvpA family. As to quaternary structure, the gas vesicle shell is 2 nm thick and consists of a single layer of this protein. It forms helical ribs nearly perpendicular to the long axis of the vesicle.

It is found in the gas vesicle shell. Gas vesicles are hollow, gas filled proteinaceous nanostructures found in some microorganisms. During planktonic growth they allow positioning of the organism at a favorable depth for light or nutrient acquisition. GvpA forms the protein shell. The sequence is that of Gas vesicle protein A from Bradyrhizobium sp. (strain ORS 278).